Consider the following 604-residue polypeptide: Ribosome-inactivating protein PMRIPm (604 aa).

A signal peptide spans Met-1–Gln-43. The active site involves Glu-211. 3 disulfide bridges follow: Cys-301-Cys-332, Cys-348-Cys-367, and Cys-392-Cys-409. Ricin B-type lectin domains follow at residues Gly-335–Gly-463 and Val-466–Val-598. The stretch at Ala-345–Ser-387 is one 1-alpha repeat. One copy of the 1-beta repeat lies at Leu-389 to Asn-429. Residues Ser-432–Asp-465 form a 1-gamma repeat. The stretch at Gln-477–Ala-521 is one 2-alpha repeat. Cys-480 and Cys-502 form a disulfide bridge. Asn-490 is a glycosylation site (N-linked (GlcNAc...) asparagine). Residues Arg-525 to Asn-563 form a 2-beta repeat. The 2-gamma repeat unit spans residues Ala-566–Thr-599.

The protein belongs to the ribosome-inactivating protein family. Type 2 RIP subfamily. Disulfide-linked dimer of A and B chains. In terms of processing, the precursor is processed in two chains, A and B, that are linked by a disulfide bond. Post-translationally, glycosylated. The N-terminus is blocked. In terms of tissue distribution, expressed in rhizome and abundantly in leaves (at protein level).

It carries out the reaction Endohydrolysis of the N-glycosidic bond at one specific adenosine on the 28S rRNA.. Strongly inhibited by asialofetuin and asialomucin. In terms of biological role, gal/GalNAc-specific agglutinin. Behaves as a type-2 ribosome-inactivating protein. Inhibits mammalian ribosomes. The A chain is responsible for inhibiting protein synthesis through the catalytic inactivation of 60S ribosomal subunits by removing adenine from position 4,324 of 28S rRNA. The B chain binds to cell receptors and probably facilitates the entry into the cell of the A chain; B chains are also responsible for cell agglutination (lectin activity). Involved in plant defense against insects. Has very low cytotoxic activity against the human tumor cell line Molt4, but higher against CEM. The sequence is that of Ribosome-inactivating protein PMRIPm from Polygonatum multiflorum (Solomon's seal).